The chain runs to 219 residues: GTP cyclohydrolase 1 (219 aa).

Residues 1-37 (MDAVLKSLSVRLPDAADKRSDTGRPERVTERPTRQEA) form a disordered region. Positions 14–37 (DAADKRSDTGRPERVTERPTRQEA) are enriched in basic and acidic residues. Zn(2+)-binding residues include Cys-108, His-111, and Cys-179.

Belongs to the GTP cyclohydrolase I family. Homomer.

The catalysed reaction is GTP + H2O = 7,8-dihydroneopterin 3'-triphosphate + formate + H(+). Its pathway is cofactor biosynthesis; 7,8-dihydroneopterin triphosphate biosynthesis; 7,8-dihydroneopterin triphosphate from GTP: step 1/1. The polypeptide is GTP cyclohydrolase 1 (Methylobacterium sp. (strain 4-46)).